We begin with the raw amino-acid sequence, 897 residues long: Interleukin enhancer-binding factor 3 (897 aa).

The DZF domain occupies 5-378 (RIFVNDDRHV…PMKRPMEEDG (374 aa)). The tract at residues 52–85 (QEKGNSELSEAENMDTPPDDESKEGAGEQKAEHM) is disordered. Positions 60 to 73 (SEAENMDTPPDDES) are enriched in acidic residues. T67 is modified (phosphothreonine). A compositionally biased stretch (basic and acidic residues) spans 74 to 85 (KEGAGEQKAEHM). K100 bears the N6-acetyllysine mark. Phosphothreonine; by PKR is present on T188. S190 bears the Phosphoserine mark. Residue K297 forms a Glycyl lysine isopeptide (Lys-Gly) (interchain with G-Cter in ubiquitin) linkage. Residue T315 is modified to Phosphothreonine; by PKR. K348 is covalently cross-linked (Glycyl lysine isopeptide (Lys-Gly) (interchain with G-Cter in SUMO1)). The segment at 363–401 (TTYAITPMKRPMEEDGEEKSPSKKKKKIQKKEEKAEPPQ) is disordered. The short motif at 371-389 (KRPMEEDGEEKSPSKKKKK) is the Bipartite nuclear localization signal element. Basic and acidic residues predominate over residues 372-383 (RPMEEDGEEKSP). Residues S382 and S384 each carry the phosphoserine modification. Residue K396 forms a Glycyl lysine isopeptide (Lys-Gly) (interchain with G-Cter in SUMO2) linkage. Residues 398-467 (EPPQAMNALM…AVKVLQDMGL (70 aa)) enclose the DRBM 1 domain. K460 carries the N6-acetyllysine modification. Disordered stretches follow at residues 466–524 (GLPT…LTKH), 624–662 (GMGGPMHNEAPPPPNIRGRGRGGNIRGRGRGRGFGGTNH), and 720–897 (GDSY…YQYR). The segment covering 472-481 (EGRDSSKGED) has biased composition (basic and acidic residues). Phosphoserine occurs at positions 476, 477, 482, and 486. Residue K489 forms a Glycyl lysine isopeptide (Lys-Gly) (interchain with G-Cter in SUMO2) linkage. The segment covering 499–508 (VEAVSNPSSV) has biased composition (low complexity). A DRBM 2 domain is found at 524–590 (HGKNPVMELN…ALAALEKLFP (67 aa)). The interaction with PRMT1 stretch occupies residues 609–897 (RGGPKFAAKP…TEHSMNYQYR (289 aa)). A compositionally biased stretch (gly residues) spans 644 to 662 (RGGNIRGRGRGRGFGGTNH). Composition is skewed to low complexity over residues 745 to 769 (SYSSGYQSHQGQQQPYNQSQYSSYG), 783 to 794 (GSYSSYSNSYNS), and 802 to 812 (DYSYDSKFNYS). A phosphoserine mark is found at S794, S812, S814, and S818. Residues 813 to 822 (GSGGRSGGNS) are compositionally biased toward gly residues. A compositionally biased stretch (low complexity) spans 823 to 833 (YGSSGSSYNTG). The segment covering 834 to 844 (SHGGYGAGSGG) has biased composition (gly residues). Residues 845–885 (SSSYQGKQGGYSSQSNYSSPGSSQSYSGPASSYQSSQGGYS) show a composition bias toward low complexity.

Identified in a IGF2BP1-dependent mRNP granule complex containing untranslated mRNAs. Interacts with FUS and SMN. Interacts (via C-terminus) with PRMT1. Forms a complex with ILF2. Can also bind to PRKDC/XRCC7: this may stabilize the interaction of PRKDC/XRCC7 and the heterodimeric complex of XRCC6/KU70 and XRCC5/KU80. Forms a heteromeric complex with ZNF346 and ILF3. Found in a nuclear export complex with XPO5, ILF3, Ran and double-stranded RNA or double-stranded minihelix VA1 RNA. Found in a nuclear export complex with XPO5, RAN, ILF3, ZNF346 and double-stranded RNA. Interacts with XPO5 and ZNF346. Forms a complex with ILF2, YLPM1, KHDRBS1, RBMX, NCOA5 and PPP1CA. Interacts with AGO1 and AGO2. Interacts with DHX36; this interaction occurs in a RNA-dependent manner. Interacts with ELAVL1; this interaction occurs in a RNA-dependent manner. Interacts with HAVCR2; this interaction promotes ILF3 ubiquitination and subsequent degradation. In terms of processing, phosphorylated at Thr-188 and Thr-315 by PKR in response to RNA viruses. This phosphorylation results in the dissociation of ILF2 from the ILF2-ILF3 complex resulting in a cytoplasmic sequestration of ILF3 where it can bind to viral RNAs and impede viral replication. Methylated by protein arginine N-methyltransferase 1.

Its subcellular location is the nucleus. It localises to the nucleolus. It is found in the cytoplasm. In terms of biological role, RNA-binding protein that plays an essential role in the biogenesis of circular RNAs (circRNAs) which are produced by back-splicing circularization of pre-mRNAs. Within the nucleus, promotes circRNAs processing by stabilizing the regulatory elements residing in the flanking introns of the circularized exons. Plays thereby a role in the back-splicing of a subset of circRNAs. As a consequence, participates in a wide range of transcriptional and post-transcriptional processes. Binds to poly-U elements and AU-rich elements (AREs) in the 3'-UTR of target mRNAs. Upon viral infection, ILF3 accumulates in the cytoplasm and participates in the innate antiviral response. Mechanistically, ILF3 becomes phosphorylated and activated by the double-stranded RNA-activated protein kinase/PKR which releases ILF3 from cellular mature circRNAs. In turn, unbound ILF3 molecules are able to interact with and thus inhibit viral mRNAs. The chain is Interleukin enhancer-binding factor 3 (Ilf3) from Rattus norvegicus (Rat).